We begin with the raw amino-acid sequence, 297 residues long: uncharacterized protein (297 aa).

The protein belongs to the glycosyltransferase 2 family.

This is an uncharacterized protein from Mycoplasma genitalium (strain ATCC 33530 / DSM 19775 / NCTC 10195 / G37) (Mycoplasmoides genitalium).